The chain runs to 926 residues: Bifunctional uridylyltransferase/uridylyl-removing enzyme (926 aa).

Positions 1–379 are uridylyltransferase; the sequence is MPVSFLSLAS…PKSRRSGASK (379 aa). Positions 380-736 are uridylyl-removing; sequence QIDGFPVIQG…GHEMPAYDAT (357 aa). The 123-residue stretch at 496-618 folds into the HD domain; that stretch reads VDEHAIRALD…VKSPERLRLL (123 aa). ACT domains are found at residues 737–814 and 849–926; these read MISL…IRSS and VIEV…ISEK.

It belongs to the GlnD family. Requires Mg(2+) as cofactor.

It catalyses the reaction [protein-PII]-L-tyrosine + UTP = [protein-PII]-uridylyl-L-tyrosine + diphosphate. The enzyme catalyses [protein-PII]-uridylyl-L-tyrosine + H2O = [protein-PII]-L-tyrosine + UMP + H(+). Its activity is regulated as follows. Uridylyltransferase (UTase) activity is inhibited by glutamine, while glutamine activates uridylyl-removing (UR) activity. Modifies, by uridylylation and deuridylylation, the PII regulatory proteins (GlnB and homologs), in response to the nitrogen status of the cell that GlnD senses through the glutamine level. Under low glutamine levels, catalyzes the conversion of the PII proteins and UTP to PII-UMP and PPi, while under higher glutamine levels, GlnD hydrolyzes PII-UMP to PII and UMP (deuridylylation). Thus, controls uridylylation state and activity of the PII proteins, and plays an important role in the regulation of nitrogen assimilation and metabolism. This is Bifunctional uridylyltransferase/uridylyl-removing enzyme from Zymomonas mobilis subsp. mobilis (strain ATCC 31821 / ZM4 / CP4).